Reading from the N-terminus, the 176-residue chain is MTAAPADFARARSEFLSIDAPRVEDGAAIWRIARDSQVLDLNSSYSYLLWCRDFAATSAVARGENGEPIAFVTGYVRPDRPQTLVVWQVAVDQAHRGKGLAAALLDALTARVAADQVLSSVETTITPDNTASDRLFTSYAQRHDVALEKEVLFDGELFPEETHLPEVLYRIGPFAT.

Residues 16–171 (LSIDAPRVED…THLPEVLYRI (156 aa)) form the N-acetyltransferase domain.

The protein belongs to the acetyltransferase family. EctA subfamily.

It catalyses the reaction L-2,4-diaminobutanoate + acetyl-CoA = (2S)-4-acetamido-2-aminobutanoate + CoA + H(+). It participates in amine and polyamine biosynthesis; ectoine biosynthesis; L-ectoine from L-aspartate 4-semialdehyde: step 2/3. Its function is as follows. Catalyzes the acetylation of L-2,4-diaminobutyrate (DABA) to gamma-N-acetyl-alpha,gamma-diaminobutyric acid (ADABA) with acetyl coenzyme A. This Streptomyces anulatus (Streptomyces chrysomallus) protein is L-2,4-diaminobutyric acid acetyltransferase (ectA).